The sequence spans 497 residues: Lysophospholipid acyltransferase 5 (497 aa).

The next 6 helical transmembrane spans lie at 31–51 (LLTI…ISVI), 74–94 (GLDT…VLLL), 100–120 (IFLA…YFYT), 173–193 (LELL…QFPF), 213–235 (AGVR…LRYL), and 264–286 (SLYK…GLTY). Catalysis depends on residues Asn-322 and His-358. Residues 339-361 (FLNNRTISYGAALGFLAVWHGYH) form a helical membrane-spanning segment. Residue Asn-398 is glycosylated (N-linked (GlcNAc...) asparagine). 2 consecutive transmembrane segments (helical) span residues 408–428 (FITL…AFVF) and 435–455 (IVVY…WAAF). The disordered stretch occupies residues 469-497 (KLAGEDQKLQDSNTDKLVEEKKPEDKKSE). Positions 470 to 497 (LAGEDQKLQDSNTDKLVEEKKPEDKKSE) are enriched in basic and acidic residues. A Phosphoserine modification is found at Ser-480.

Belongs to the membrane-bound acyltransferase family. During gastrulation, expressed mainly along the midline in the presumptive mesoderm. During germ band elongation, expressed in mesoderm and endoderm primordia and in the cephalic furrow. Expression in mesoderm and endoderm lineages continues during germ band shortening. At the end of this process, no longer detected in somatic mesoderm or endoderm layer with expression restricted to anterior and posterior domains of the visceral mesoderm.

It is found in the endoplasmic reticulum. It localises to the membrane. It carries out the reaction a 1-acyl-sn-glycero-3-phospho-L-serine + an acyl-CoA = a 1,2-diacyl-sn-glycero-3-phospho-L-serine + CoA. The enzyme catalyses 1-(9Z-octadecenoyl)-sn-glycero-3-phospho-L-serine + (9Z)-hexadecenoyl-CoA = 1-(9Z-octadecenoyl)-2-(9Z-hexadecenoyl)-sn-glycero-3-phospho-L-serine + CoA. The catalysed reaction is a 1-acyl-sn-glycero-3-phosphocholine + an acyl-CoA = a 1,2-diacyl-sn-glycero-3-phosphocholine + CoA. It catalyses the reaction 1-hexadecanoyl-sn-glycero-3-phosphocholine + (9Z)-octadecenoyl-CoA = 1-hexadecanoyl-2-(9Z-octadecenoyl)-sn-glycero-3-phosphocholine + CoA. It carries out the reaction (9Z,12Z)-octadecadienoyl-CoA + 1-hexadecanoyl-sn-glycero-3-phosphocholine = 1-hexadecanoyl-2-(9Z,12Z-octadecadienoyl)-sn-glycero-3-phosphocholine + CoA. The enzyme catalyses (5Z,8Z,11Z,14Z)-eicosatetraenoyl-CoA + 1-hexadecanoyl-sn-glycero-3-phosphocholine = 1-hexadecanoyl-2-(5Z,8Z,11Z,14Z-eicosatetraenoyl)-sn-glycero-3-phosphocholine + CoA. The catalysed reaction is (9Z)-hexadecenoyl-CoA + 1-hexadecanoyl-sn-glycero-3-phosphocholine = 1-hexadecanoyl-2-(9Z-hexadecenoyl)-sn-glycero-3-phosphocholine + CoA. It functions in the pathway lipid metabolism; phospholipid metabolism. Functionally, acyltransferase that mediates the acylation of lysophospholipids to produce phospholipids (glycerophospholipids). Highest activity with lysophosphatidylcholine (1-acyl-sn-glycero-3-phosphocholine or LPC) producing phosphatidylcholine (1,2-diacyl-sn-glycero-3-phosphocholine or PC) (LPCAT activity), but also converts lysophosphatidylserine (1-acyl-2-hydroxy-sn-glycero-3-phospho-L-serine or LPS) to phosphatidylserine (1,2-diacyl-sn-glycero-3-phospho-L-serine or PS) (LPSAT activity). Has a preference for unsaturated fatty acids of at least 16 carbons such as oleoyl-CoA ((9Z)-octadecenoyl-CoA) and palmitoleoyl-CoA ((9Z)-hexadecenoyl-CoA). Glycerophospholipids are important structural and functional components of cellular membrane, acyl-chain remodeling regulates the molecular species distribution of glycerophospholipids which can affect membrane fluidity and curvature. Essential for fertility and viability together with Oysgedart (Oys). Required for germ cells to migrate into the mesoderm. This chain is Lysophospholipid acyltransferase 5, found in Drosophila melanogaster (Fruit fly).